The sequence spans 134 residues: Cytochrome b (134 aa).

A run of 3 helical transmembrane segments spans residues 33–53 (FGSL…FLAM), 77–98 (WLLR…YLHV), and 113–133 (WNIG…GYVL). H83 and H97 together coordinate heme b.

This sequence belongs to the cytochrome b family. As to quaternary structure, the cytochrome bc1 complex contains 11 subunits: 3 respiratory subunits (MT-CYB, CYC1 and UQCRFS1), 2 core proteins (UQCRC1 and UQCRC2) and 6 low-molecular weight proteins (UQCRH/QCR6, UQCRB/QCR7, UQCRQ/QCR8, UQCR10/QCR9, UQCR11/QCR10 and a cleavage product of UQCRFS1). This cytochrome bc1 complex then forms a dimer. It depends on heme b as a cofactor.

The protein localises to the mitochondrion inner membrane. In terms of biological role, component of the ubiquinol-cytochrome c reductase complex (complex III or cytochrome b-c1 complex) that is part of the mitochondrial respiratory chain. The b-c1 complex mediates electron transfer from ubiquinol to cytochrome c. Contributes to the generation of a proton gradient across the mitochondrial membrane that is then used for ATP synthesis. This is Cytochrome b (MT-CYB) from Sturnira tildae (Tilda's yellow-shouldered bat).